A 484-amino-acid polypeptide reads, in one-letter code: Poly(A) RNA polymerase GLD2 (484 aa).

Phosphoserine is present on residues serine 62 and serine 69. The Nuclear localization signal signature appears at 76–92; the sequence is KRISDEKAFRLDGKRQR. At serine 95 the chain carries Phosphoserine. Mg(2+)-binding residues include aspartate 213 and aspartate 215. The PAP-associated domain occupies 386 to 440; that stretch reads SLGDLLLGFLKYYATEFDWNTQMISVREAKAIPRPDDMEWRNKYICVEEPFDGTN.

Belongs to the DNA polymerase type-B-like family. GLD2 subfamily. In terms of assembly, interacts with CPEB1, CPEB2, CPSF1 and PABPC1. Interacts with QKI isoform QKI7; promoting recruitment to miRNA miR-122 and miR-122 stabilization. It depends on Mg(2+) as a cofactor. Mn(2+) serves as cofactor.

The protein localises to the cytoplasm. It is found in the nucleus. It carries out the reaction RNA(n) + ATP = RNA(n)-3'-adenine ribonucleotide + diphosphate. In terms of biological role, cytoplasmic poly(A) RNA polymerase that adds successive AMP monomers to the 3'-end of specific RNAs, forming a poly(A) tail. In contrast to the canonical nuclear poly(A) RNA polymerase, it only adds poly(A) to selected cytoplasmic mRNAs. Does not play a role in replication-dependent histone mRNA degradation. Adds a single nucleotide to the 3' end of specific miRNAs, monoadenylation stabilizes and prolongs the activity of some but not all miRNAs. This chain is Poly(A) RNA polymerase GLD2, found in Rattus norvegicus (Rat).